A 1052-amino-acid chain; its full sequence is uncharacterized protein (1052 aa).

Belongs to the IIV-6 050L family.

This is an uncharacterized protein from Invertebrate iridescent virus 6 (IIV-6).